Consider the following 494-residue polypeptide: MRIRRILYFYGNLPNTYTANVLRRLAFSCWHTHQLPPTISATRSCFSAMAEMQDSHNEMELYSPNPEVRGMTCLNRDAFDKTIHVPVIKIKKEIINRLMKSLKHRLIQRPSLKRVIEDPKDDVNKLVLLDPYKVKSIDSFDESDHVLFKQFDVNPQVSQYELQLTYENFKCEEILRAVLPKGQDVTSGFSRVGHIAHMNLRDHQLPYKNVIGQVILDKNPGITSVVNKTNTIDSTYRNFQMEVLAGEENMITKVKENYVTYEFDFSKVYWNPRLGTEHNRIIGFLKARDVLFDVFAGVGPFAVPAAKKNCTVYANDLNPESYKWLLHNCKLNKVEKRVQAFNTDGRDFIKTTIKKELLKYADMPSAEEKPSLHIAMNLPALAVEFLDAFKNLLEEEPCNSFILPTIHCYSFSKDDDPLQDVKARAESFLGTTLEDCSMHLVRNVAPNKEMVCISFKLPSSVLFQRLSDTGEPESKRPRTAEAFPLPHVQQSRNS.

The transit peptide at 1-32 (MRIRRILYFYGNLPNTYTANVLRRLAFSCWHT) directs the protein to the mitochondrion. Residues H278, 316 to 317 (DL), 344 to 345 (DG), and N377 contribute to the S-adenosyl-L-methionine site. The interval 468–494 (DTGEPESKRPRTAEAFPLPHVQQSRNS) is disordered.

The protein belongs to the class I-like SAM-binding methyltransferase superfamily. TRM5/TYW2 family. Monomer.

The protein localises to the mitochondrion matrix. The protein resides in the nucleus. It localises to the cytoplasm. It carries out the reaction guanosine(37) in tRNA + S-adenosyl-L-methionine = N(1)-methylguanosine(37) in tRNA + S-adenosyl-L-homocysteine + H(+). In terms of biological role, involved in mitochondrial tRNA methylation. Specifically methylates the N1 position of guanosine-37 in various tRNAs. Methylation is not dependent on the nature of the nucleoside 5' of the target nucleoside. This is the first step in the biosynthesis of wybutosine (yW), a modified base adjacent to the anticodon of tRNAs and required for accurate decoding. The chain is tRNA (guanine(37)-N(1))-methyltransferase (trmt5) from Xenopus tropicalis (Western clawed frog).